We begin with the raw amino-acid sequence, 163 residues long: MSKTRVIYPGTFDPITNGHVDLVTRASRMFDEVVVAIAIGHHKKPLFSLEERVKLAQLSLSHLHNVEFVGFDGLLVNFFREQNATAVLRGLRAVSDFEYEFQLANMNRQLDHHFEAVFLTPSEQYSFISSTLVREIARLRGDVAKFVPQAVVEAFEYKHQQGW.

Thr-11 serves as a coordination point for substrate. Residues 11–12 (TF) and His-19 each bind ATP. Residues Lys-43, Leu-75, and Arg-89 each contribute to the substrate site. ATP is bound by residues 90–92 (GLR), Glu-100, and 125–131 (YSFISST).

It belongs to the bacterial CoaD family. Homohexamer. It depends on Mg(2+) as a cofactor.

It is found in the cytoplasm. The enzyme catalyses (R)-4'-phosphopantetheine + ATP + H(+) = 3'-dephospho-CoA + diphosphate. The protein operates within cofactor biosynthesis; coenzyme A biosynthesis; CoA from (R)-pantothenate: step 4/5. Functionally, reversibly transfers an adenylyl group from ATP to 4'-phosphopantetheine, yielding dephospho-CoA (dPCoA) and pyrophosphate. The chain is Phosphopantetheine adenylyltransferase from Acinetobacter baylyi (strain ATCC 33305 / BD413 / ADP1).